Here is a 266-residue protein sequence, read N- to C-terminus: uncharacterized protein (266 aa).

This is an uncharacterized protein from Acanthamoeba polyphaga (Amoeba).